Consider the following 513-residue polypeptide: ATP synthase subunit alpha 2 (513 aa).

Position 169-176 (169-176) interacts with ATP; that stretch reads GDRQCGKT.

It belongs to the ATPase alpha/beta chains family. In terms of assembly, F-type ATPases have 2 components, CF(1) - the catalytic core - and CF(0) - the membrane proton channel. CF(1) has five subunits: alpha(3), beta(3), gamma(1), delta(1), epsilon(1). CF(0) has three main subunits: a(1), b(2) and c(9-12). The alpha and beta chains form an alternating ring which encloses part of the gamma chain. CF(1) is attached to CF(0) by a central stalk formed by the gamma and epsilon chains, while a peripheral stalk is formed by the delta and b chains.

It is found in the cell inner membrane. The enzyme catalyses ATP + H2O + 4 H(+)(in) = ADP + phosphate + 5 H(+)(out). In terms of biological role, produces ATP from ADP in the presence of a proton gradient across the membrane. The alpha chain is a regulatory subunit. The sequence is that of ATP synthase subunit alpha 2 from Paraburkholderia xenovorans (strain LB400).